Here is a 628-residue protein sequence, read N- to C-terminus: Translation factor GUF1, mitochondrial (628 aa).

One can recognise a tr-type G domain in the interval 27–209 (LPSRNFSIIA…AIISRIPPPS (183 aa)). Residues 36 to 43 (AHIDHGKS), 102 to 106 (DTPGH), and 156 to 159 (NKID) each bind GTP.

This sequence belongs to the TRAFAC class translation factor GTPase superfamily. Classic translation factor GTPase family. LepA subfamily.

The protein localises to the mitochondrion inner membrane. The catalysed reaction is GTP + H2O = GDP + phosphate + H(+). Promotes mitochondrial protein synthesis. May act as a fidelity factor of the translation reaction, by catalyzing a one-codon backward translocation of tRNAs on improperly translocated ribosomes. Binds to mitochondrial ribosomes in a GTP-dependent manner. The sequence is that of Translation factor GUF1, mitochondrial from Laccaria bicolor (strain S238N-H82 / ATCC MYA-4686) (Bicoloured deceiver).